The primary structure comprises 296 residues: Arginase (296 aa).

4 residues coordinate Mn(2+): His98, Asp124, His126, and Asp128. Residues Asn130, Ser137, and Asp178 each coordinate L-arginine. 2 residues coordinate Mn(2+): Asp225 and Asp227. L-arginine-binding residues include Asp227 and Thr239.

This sequence belongs to the arginase family. In terms of assembly, monomer. Homodimer; dimerization is dispensable for catalytic activity. Mn(2+) is required as a cofactor.

The enzyme catalyses L-arginine + H2O = urea + L-ornithine. It functions in the pathway nitrogen metabolism; urea cycle; L-ornithine and urea from L-arginine: step 1/1. With respect to regulation, substitution of the loosely bound surface exposed Mn(2+) with Mg(2+), Zn(2+), Ni(2+) or Co(2+) results in similar catalytic activity, substitution with Cd(2+) and Cu(2+) reduces catalytic activity and substitution with Hg(2+) and Ca(2+) inhibits the enzyme. Inhibited by L-norvaline. Functionally, catalyzes the hydrolysis of L-arginine into urea and L-ornithine, which is a precursor for polyamine biosynthesis. By depleting host L-arginine, a substrate for nitric oxide synthase (NOS), prevents the production of nitric oxide (NO) by host activated macrophages, and thus allows the parasite to evade host immune response. This chain is Arginase, found in Entamoeba histolytica (strain ATCC 30459 / HM-1:IMSS / ABRM).